A 443-amino-acid polypeptide reads, in one-letter code: Xaa-Pro dipeptidase (443 aa).

Residues Asp-246, Asp-257, His-339, Glu-384, and Glu-423 each coordinate Mn(2+).

The protein belongs to the peptidase M24B family. Bacterial-type prolidase subfamily. Requires Mn(2+) as cofactor.

It catalyses the reaction Xaa-L-Pro dipeptide + H2O = an L-alpha-amino acid + L-proline. Its function is as follows. Splits dipeptides with a prolyl residue in the C-terminal position. The sequence is that of Xaa-Pro dipeptidase from Salmonella paratyphi B (strain ATCC BAA-1250 / SPB7).